A 304-amino-acid polypeptide reads, in one-letter code: N-acetyllactosaminide alpha-2,3-sialyltransferase (304 aa).

CMP-N-acetyl-beta-neuraminate-binding positions include 221–225, 242–243, and 262–263; these read FPHPA, FE, and SS. The Proton donor role is filled by His-223.

The protein belongs to the glycosyltransferase 52 family.

It catalyses the reaction a beta-D-galactosyl-(1-&gt;4)-N-acetyl-beta-D-glucosaminyl derivative + CMP-N-acetyl-beta-neuraminate = an N-acetyl-alpha-neuraminyl-(2-&gt;3)-beta-D-galactosyl-(1-&gt;4)-N-acetyl-beta-D-glucosaminyl derivative + CMP + H(+). The protein operates within bacterial outer membrane biogenesis; lipooligosaccharide biosynthesis. Functionally, catalyzes the transfer of sialic acid from the substrate CMP-N-acetylneuraminate to the terminal galactose residue of the N-acetyllactosamine moiety of surface lipooligosaccharide (LOS). Thus, functions in the sialylation of LOS, which plays a role in the evasion of the host immune response. This Haemophilus influenzae (strain ATCC 51907 / DSM 11121 / KW20 / Rd) protein is N-acetyllactosaminide alpha-2,3-sialyltransferase.